Consider the following 187-residue polypeptide: dCTP deaminase, dUMP-forming (187 aa).

DCTP is bound by residues 101 to 106 (KSSLGR) and aspartate 119. Glutamate 129 serves as the catalytic Proton donor/acceptor. The dCTP site is built by glutamine 148, tyrosine 162, and glutamine 174.

The protein belongs to the dCTP deaminase family. In terms of assembly, homotrimer.

It catalyses the reaction dCTP + 2 H2O = dUMP + NH4(+) + diphosphate. It functions in the pathway pyrimidine metabolism; dUMP biosynthesis; dUMP from dCTP: step 1/1. In terms of biological role, bifunctional enzyme that catalyzes both the deamination of dCTP to dUTP and the hydrolysis of dUTP to dUMP without releasing the toxic dUTP intermediate. The protein is dCTP deaminase, dUMP-forming of Corynebacterium kroppenstedtii (strain DSM 44385 / JCM 11950 / CIP 105744 / CCUG 35717).